The chain runs to 1035 residues: Tyrosine-protein kinase-like otk (1035 aa).

Residues 1 to 23 form the signal peptide; the sequence is MDMDVMMISMCILASTLMAPGWA. Ig-like C2-type domains follow at residues 24-109, 110-199, 251-365, 368-464, and 469-559; these read STSG…REAS, PPAK…RVMS, PEDL…APLN, PGLL…VSIN, and PKFS…VQLV. Topologically, residues 24–582 are extracellular; sequence STSGFLRVPQ…GGDGFLVTRA (559 aa). 5 cysteine pairs are disulfide-bonded: cysteine 47-cysteine 96, cysteine 138-cysteine 188, cysteine 276-cysteine 354, cysteine 399-cysteine 448, and cysteine 491-cysteine 543. Asparagine 336, asparagine 418, asparagine 430, asparagine 445, asparagine 513, and asparagine 525 each carry an N-linked (GlcNAc...) asparagine glycan. The chain crosses the membrane as a helical span at residues 583–603; it reads VLITMTVALAYIVLVVGLMLW. Residues 604 to 1035 are Cytoplasmic-facing; it reads CRYRRQARKA…SKAMQSVAEK (432 aa). Disordered regions lie at residues 623–683 and 721–775; these read AGGD…KSVY and AQSD…KEEE. Over residues 658–676 the composition is skewed to polar residues; sequence KSNGDAQKSDDTACSQQSR. Residue serine 681 is modified to Phosphoserine. In terms of domain architecture, Protein kinase; inactive spans 693–1029; that stretch reads LSELLQIGRG…QLGSALSKAM (337 aa). Residues 723–734 show a composition bias toward basic and acidic residues; that stretch reads SDKDADTEKQHS. Acidic residues predominate over residues 766–775; it reads DDIEEIKEEE.

Belongs to the protein kinase superfamily. Tyr protein kinase family. Insulin receptor subfamily. As to quaternary structure, interacts with plexA; component of a receptor complex that mediates the repulsive signaling in response to Semaphorin ligands.

It localises to the cell membrane. Its function is as follows. Acts as a calcium-dependent, homophilic cell adhesion molecule that regulates neural recognition during the development of the nervous system. Component of the repulsive Plexin signaling response to regulate motor axon guidance at the embryonic stage. Also component of a receptor complex that is required in the adult visual system to innervate the lamina layer; specific targeting of R1-R6 axons. The polypeptide is Tyrosine-protein kinase-like otk (Drosophila persimilis (Fruit fly)).